The sequence spans 375 residues: Queuine tRNA-ribosyltransferase (375 aa).

Aspartate 94 serves as the catalytic Proton acceptor. Residues 94-98, aspartate 148, glutamine 191, and glycine 218 each bind substrate; that span reads DSGGF. Residues 249–255 are RNA binding; sequence GVGSPDD. The active-site Nucleophile is the aspartate 268. An RNA binding; important for wobble base 34 recognition region spans residues 273 to 277; that stretch reads TRIAR. Zn(2+) is bound by residues cysteine 306, cysteine 308, cysteine 311, and histidine 337.

The protein belongs to the queuine tRNA-ribosyltransferase family. In terms of assembly, homodimer. Within each dimer, one monomer is responsible for RNA recognition and catalysis, while the other monomer binds to the replacement base PreQ1. It depends on Zn(2+) as a cofactor.

The enzyme catalyses 7-aminomethyl-7-carbaguanine + guanosine(34) in tRNA = 7-aminomethyl-7-carbaguanosine(34) in tRNA + guanine. The protein operates within tRNA modification; tRNA-queuosine biosynthesis. In terms of biological role, catalyzes the base-exchange of a guanine (G) residue with the queuine precursor 7-aminomethyl-7-deazaguanine (PreQ1) at position 34 (anticodon wobble position) in tRNAs with GU(N) anticodons (tRNA-Asp, -Asn, -His and -Tyr). Catalysis occurs through a double-displacement mechanism. The nucleophile active site attacks the C1' of nucleotide 34 to detach the guanine base from the RNA, forming a covalent enzyme-RNA intermediate. The proton acceptor active site deprotonates the incoming PreQ1, allowing a nucleophilic attack on the C1' of the ribose to form the product. After dissociation, two additional enzymatic reactions on the tRNA convert PreQ1 to queuine (Q), resulting in the hypermodified nucleoside queuosine (7-(((4,5-cis-dihydroxy-2-cyclopenten-1-yl)amino)methyl)-7-deazaguanosine). This is Queuine tRNA-ribosyltransferase from Thermoanaerobacter pseudethanolicus (strain ATCC 33223 / 39E) (Clostridium thermohydrosulfuricum).